The sequence spans 436 residues: GTPase Der (436 aa).

2 consecutive EngA-type G domains span residues 4-167 (PTVA…PTEA) and 175-351 (IKFS…QSQN). GTP contacts are provided by residues 10-17 (GRPNVGKS), 57-61 (DTGGI), 119-122 (NKVD), 181-188 (GRPNVGKS), 229-233 (DTAGM), and 294-297 (NKWD). In terms of domain architecture, KH-like spans 352-436 (TRIPSAVLND…PIRLIARKRK (85 aa)).

Belongs to the TRAFAC class TrmE-Era-EngA-EngB-Septin-like GTPase superfamily. EngA (Der) GTPase family. Associates with the 50S ribosomal subunit.

In terms of biological role, GTPase that plays an essential role in the late steps of ribosome biogenesis. This Streptococcus mutans serotype c (strain ATCC 700610 / UA159) protein is GTPase Der.